Reading from the N-terminus, the 212-residue chain is ATP-dependent dethiobiotin synthetase BioD (212 aa).

ATP is bound at residue 13–18; sequence GIGKTV. A Mg(2+)-binding site is contributed by threonine 17. The active site involves lysine 33. Residue serine 37 participates in substrate binding. Glutamate 100 lines the Mg(2+) pocket. Residues 100-103 and 184-186 contribute to the ATP site; these read EGAG and PRL.

This sequence belongs to the dethiobiotin synthetase family. In terms of assembly, homodimer. Requires Mg(2+) as cofactor.

It is found in the cytoplasm. It catalyses the reaction (7R,8S)-7,8-diammoniononanoate + CO2 + ATP = (4R,5S)-dethiobiotin + ADP + phosphate + 3 H(+). Its pathway is cofactor biosynthesis; biotin biosynthesis; biotin from 7,8-diaminononanoate: step 1/2. Its function is as follows. Catalyzes a mechanistically unusual reaction, the ATP-dependent insertion of CO2 between the N7 and N8 nitrogen atoms of 7,8-diaminopelargonic acid (DAPA, also called 7,8-diammoniononanoate) to form a ureido ring. In Agrobacterium fabrum (strain C58 / ATCC 33970) (Agrobacterium tumefaciens (strain C58)), this protein is ATP-dependent dethiobiotin synthetase BioD.